The following is a 179-amino-acid chain: Peptidyl-prolyl cis-trans isomerase A (179 aa).

Residues 15–178 (FFDITIGGVE…KPVVIANCGQ (164 aa)) form the PPIase cyclophilin-type domain.

The protein belongs to the cyclophilin-type PPIase family.

It is found in the cytoplasm. The protein resides in the cytosol. It catalyses the reaction [protein]-peptidylproline (omega=180) = [protein]-peptidylproline (omega=0). With respect to regulation, binds cyclosporin A (CsA). CsA mediates some of its effects via an inhibitory action on PPIase. In terms of biological role, PPIase that catalyzes the cis-trans isomerization of proline imidic peptide bonds in oligopeptides and may therefore assist protein folding. In Dictyostelium discoideum (Social amoeba), this protein is Peptidyl-prolyl cis-trans isomerase A (ppiA).